Here is a 61-residue protein sequence, read N- to C-terminus: Large ribosomal subunit protein bL32 (61 aa).

Positions M1–H19 are enriched in basic residues. Residues M1–D20 form a disordered region.

The protein belongs to the bacterial ribosomal protein bL32 family.

This chain is Large ribosomal subunit protein bL32, found in Porphyromonas gingivalis (strain ATCC 33277 / DSM 20709 / CIP 103683 / JCM 12257 / NCTC 11834 / 2561).